A 340-amino-acid chain; its full sequence is Putative Ig-like domain-containing protein C1 (340 aa).

Residues 207-294 (PTVTVTGIER…SSPRVMVPTI (88 aa)) form the Ig-like domain.

This Sus scrofa (Pig) protein is Putative Ig-like domain-containing protein C1.